Consider the following 281-residue polypeptide: Bifunctional protein FolD 1 (281 aa).

NADP(+) contacts are provided by residues 165–167 (GRS), S190, and I231.

This sequence belongs to the tetrahydrofolate dehydrogenase/cyclohydrolase family. Homodimer.

The catalysed reaction is (6R)-5,10-methylene-5,6,7,8-tetrahydrofolate + NADP(+) = (6R)-5,10-methenyltetrahydrofolate + NADPH. It catalyses the reaction (6R)-5,10-methenyltetrahydrofolate + H2O = (6R)-10-formyltetrahydrofolate + H(+). It participates in one-carbon metabolism; tetrahydrofolate interconversion. Its function is as follows. Catalyzes the oxidation of 5,10-methylenetetrahydrofolate to 5,10-methenyltetrahydrofolate and then the hydrolysis of 5,10-methenyltetrahydrofolate to 10-formyltetrahydrofolate. The protein is Bifunctional protein FolD 1 of Desulfitobacterium hafniense (strain Y51).